The primary structure comprises 393 residues: Fasciculation and elongation protein zeta-1 (393 aa).

Residues 1–41 (MEAPLVSLDEEFEDIRPCCTEDPEEKPQSLYGTSPHHLEDP) are disordered. Ser-58 is subject to Phosphoserine. Residues 130–154 (NGNSSDTEIHEKEEEDEFIEKSEND) are disordered. Residues 231–299 (SELTELLDQV…KKRRKEKGLS (69 aa)) are a coiled coil. Phosphoserine is present on residues Ser-299 and Ser-317.

The protein belongs to the zygin family. In terms of assembly, homodimer. Interacts with UBE4B and SAP30L. Interacts with SCOC and ULK1; SCOC interferes with ULK1-binding to FEZ1. Directly interacts with SCOC and UVRAG. Stabilizes the interaction between SCOC and UVRAG during amino acid starvation. Interacts with the NH2-terminal variable region (V1) of PKC zeta and weakly with that of PKC epsilon. Phosphorylated by protein kinase C zeta; which enhances interaction with UBE4B and polyubiquitination. Post-translationally, polyubiquitinated in a UBE4B-dependent manner; which does not lead to proteasomal degradation and may be important for neurogenic activity. Polyubiquitin linkage seems to be mainly through Lys-26. Brain.

It localises to the cytoplasm. It is found in the cytoskeleton. Its subcellular location is the microtubule organizing center. The protein resides in the centrosome. The protein localises to the cell membrane. May be involved in axonal outgrowth as component of the network of molecules that regulate cellular morphology and axon guidance machinery. May participate in the transport of mitochondria and other cargos along microtubules. In Rattus norvegicus (Rat), this protein is Fasciculation and elongation protein zeta-1 (Fez1).